Consider the following 131-residue polypeptide: Large ribosomal subunit protein bL12 (131 aa).

This sequence belongs to the bacterial ribosomal protein bL12 family. Homodimer. Part of the ribosomal stalk of the 50S ribosomal subunit. Forms a multimeric L10(L12)X complex, where L10 forms an elongated spine to which 2 to 4 L12 dimers bind in a sequential fashion. Binds GTP-bound translation factors.

Functionally, forms part of the ribosomal stalk which helps the ribosome interact with GTP-bound translation factors. Is thus essential for accurate translation. This is Large ribosomal subunit protein bL12 from Prochlorococcus marinus (strain NATL1A).